A 142-amino-acid chain; its full sequence is Galactose-6-phosphate isomerase subunit LacA (142 aa).

This sequence belongs to the LacAB/RpiB family. As to quaternary structure, heteromultimeric protein consisting of LacA and LacB.

It carries out the reaction aldehydo-D-galactose 6-phosphate = keto-D-tagatose 6-phosphate. The protein operates within carbohydrate metabolism; D-galactose 6-phosphate degradation; D-tagatose 6-phosphate from D-galactose 6-phosphate: step 1/1. The chain is Galactose-6-phosphate isomerase subunit LacA from Staphylococcus aureus (strain JH9).